The sequence spans 60 residues: Large ribosomal subunit protein uL30 (60 aa).

This sequence belongs to the universal ribosomal protein uL30 family. As to quaternary structure, part of the 50S ribosomal subunit.

In Streptomyces griseus subsp. griseus (strain JCM 4626 / CBS 651.72 / NBRC 13350 / KCC S-0626 / ISP 5235), this protein is Large ribosomal subunit protein uL30.